Here is a 229-residue protein sequence, read N- to C-terminus: MLICIPDILDKAEVADFRRVMDAAEWEDGRSTAGAQSAMVKRNEQLPPDSDVARALGQRVLSALTRSPLFISAAIPLHIFPPLFNRYASSNGHHFGVHVDNAVRGDRLTGLRIRTDLSVTLFLSEPEDYDGGVLTVEDYYGSHEVKLPAGHLVLYPASSLHLVTPVTRGTRVASFFWLQSMVRDAHARSMIFDLDTAVQALVERLGRDDPETVKLTGIYHNLIRYWADV.

In terms of domain architecture, Fe2OG dioxygenase spans 78–180 (HIFPPLFNRY…RVASFFWLQS (103 aa)). 3 residues coordinate Fe cation: H98, D100, and H161. R171 lines the 2-oxoglutarate pocket.

Fe(2+) serves as cofactor. L-ascorbate is required as a cofactor.

This chain is PKHD-type hydroxylase OCAR_6723/OCA5_c13470, found in Afipia carboxidovorans (strain ATCC 49405 / DSM 1227 / KCTC 32145 / OM5) (Oligotropha carboxidovorans).